The primary structure comprises 158 residues: 6,7-dimethyl-8-ribityllumazine synthase (158 aa).

5-amino-6-(D-ribitylamino)uracil is bound by residues tryptophan 27, 58 to 60 (SFE), and 81 to 83 (VII). (2S)-2-hydroxy-3-oxobutyl phosphate is bound at residue 86–87 (GT). The Proton donor role is filled by histidine 89. Phenylalanine 114 contacts 5-amino-6-(D-ribitylamino)uracil. Residue arginine 128 coordinates (2S)-2-hydroxy-3-oxobutyl phosphate.

This sequence belongs to the DMRL synthase family.

It catalyses the reaction (2S)-2-hydroxy-3-oxobutyl phosphate + 5-amino-6-(D-ribitylamino)uracil = 6,7-dimethyl-8-(1-D-ribityl)lumazine + phosphate + 2 H2O + H(+). Its pathway is cofactor biosynthesis; riboflavin biosynthesis; riboflavin from 2-hydroxy-3-oxobutyl phosphate and 5-amino-6-(D-ribitylamino)uracil: step 1/2. Its function is as follows. Catalyzes the formation of 6,7-dimethyl-8-ribityllumazine by condensation of 5-amino-6-(D-ribitylamino)uracil with 3,4-dihydroxy-2-butanone 4-phosphate. This is the penultimate step in the biosynthesis of riboflavin. This is 6,7-dimethyl-8-ribityllumazine synthase from Leifsonia xyli subsp. xyli (strain CTCB07).